We begin with the raw amino-acid sequence, 92 residues long: Small ribosomal subunit protein uS15c (92 aa).

Belongs to the universal ribosomal protein uS15 family. Part of the 30S ribosomal subunit.

The protein resides in the plastid. It is found in the chloroplast. The sequence is that of Small ribosomal subunit protein uS15c (rps15) from Carica papaya (Papaya).